Consider the following 350-residue polypeptide: F(420)H(2) dehydrogenase subunit H (350 aa).

8 consecutive transmembrane segments (helical) span residues 21 to 41 (GTVG…AVWI), 94 to 114 (VFML…AVFI), 128 to 148 (ISIL…FMAA), 173 to 193 (PLGI…IIDI), 200 to 220 (FVWN…ALMA), 261 to 281 (ILGS…PAFV), 288 to 308 (GLIA…MTII), and 330 to 350 (LLPL…YLGA).

It belongs to the complex I subunit 1 family. The FPO complex is composed of at least 13 different subunits. FpoA, FpoH, FpoJ, FpoK, FpoL, FpoM and FpoN proteins constitute the membrane sector of the complex.

The protein localises to the cell membrane. The catalysed reaction is methanophenazine + reduced coenzyme F420-(gamma-L-Glu)(n) = dihydromethanophenazine + oxidized coenzyme F420-(gamma-L-Glu)(n) + H(+). Its function is as follows. Component of the F(420)H(2) dehydrogenase (FPO complex) which is part of the energy-conserving F(420)H(2):heterodisulfide oxidoreductase system. The membrane-bound electron transfer system of the complex plays an important role in the metabolism of methylotrophic methanogens when the organisms grow on methanol or methylamines. Catalyzes the oxidation of methanophenazine to dihydromethanophenazine. It shuttles electrons from F(420)H(2), via FAD and iron-sulfur (Fe-S) centers, to methanophenazine (an electron carrier in the membrane). It couples the redox reaction to proton translocation (for every two electrons transferred, two hydrogen ions are translocated across the cytoplasmic membrane), and thus conserves the redox energy in a proton gradient. It also catalyzes the oxidation of F(420)H(2) with quinones such as 2,3-dimethyl-1,4-naphthoquinone, 2-methyl-1,4-naphthoquinone and tetramethyl-p-benzoquinone. This chain is F(420)H(2) dehydrogenase subunit H, found in Methanosarcina mazei (strain ATCC BAA-159 / DSM 3647 / Goe1 / Go1 / JCM 11833 / OCM 88) (Methanosarcina frisia).